We begin with the raw amino-acid sequence, 305 residues long: NAD-dependent protein deacylase SIR4 (305 aa).

Residues 1–10 (MSAQVMHNRV) constitute a mitochondrion transit peptide. Residues 11 to 305 (MGTVKDSASK…VLEELASTIR (295 aa)) form the Deacetylase sirtuin-type domain. NAD(+) contacts are provided by residues 37-57 (GAGV…GIYS) and 118-121 (QNVD). Catalysis depends on histidine 139, which acts as the Proton acceptor. Zn(2+)-binding residues include cysteine 147, cysteine 150, cysteine 209, and cysteine 212. NAD(+) contacts are provided by residues 249 to 251 (GSS), 275 to 277 (NLG), and serine 293.

The protein belongs to the sirtuin family. Class II subfamily. It depends on Zn(2+) as a cofactor.

The protein localises to the mitochondrion matrix. The enzyme catalyses N(6)-acetyl-L-lysyl-[protein] + NAD(+) + H2O = 2''-O-acetyl-ADP-D-ribose + nicotinamide + L-lysyl-[protein]. In terms of biological role, NAD-dependent protein deacylase. Catalyzes the NAD-dependent hydrolysis of acyl groups from lysine residues. The chain is NAD-dependent protein deacylase SIR4 from Batrachochytrium dendrobatidis (strain JAM81 / FGSC 10211) (Frog chytrid fungus).